The sequence spans 506 residues: Galactose/methyl galactoside import ATP-binding protein MglA (506 aa).

2 consecutive ABC transporter domains span residues 14–249 (LEMS…VGRS) and 264–506 (VILE…SLHL). 46–53 (GENGAGKS) is a binding site for ATP.

It belongs to the ABC transporter superfamily. Galactose/methyl galactoside importer (TC 3.A.1.2.3) family. As to quaternary structure, the complex is composed of one ATP-binding protein (MglA), two transmembrane proteins (MglC) and a solute-binding protein (MglB).

The protein resides in the cell inner membrane. It catalyses the reaction D-galactose(out) + ATP + H2O = D-galactose(in) + ADP + phosphate + H(+). It carries out the reaction methyl beta-D-galactoside(out) + ATP + H2O = methyl beta-D-galactoside(in) + ADP + phosphate + H(+). Part of the ABC transporter complex MglABC involved in galactose/methyl galactoside import. Responsible for energy coupling to the transport system. This is Galactose/methyl galactoside import ATP-binding protein MglA from Escherichia coli (strain K12).